The sequence spans 145 residues: Large ribosomal subunit protein uL11 (145 aa).

It belongs to the universal ribosomal protein uL11 family. In terms of assembly, part of the ribosomal stalk of the 50S ribosomal subunit. Interacts with L10 and the large rRNA to form the base of the stalk. L10 forms an elongated spine to which L12 dimers bind in a sequential fashion forming a multimeric L10(L12)X complex. One or more lysine residues are methylated.

Forms part of the ribosomal stalk which helps the ribosome interact with GTP-bound translation factors. The chain is Large ribosomal subunit protein uL11 from Porphyromonas gingivalis (strain ATCC 33277 / DSM 20709 / CIP 103683 / JCM 12257 / NCTC 11834 / 2561).